Here is a 517-residue protein sequence, read N- to C-terminus: Serine hydroxymethyltransferase 1, mitochondrial (517 aa).

The N-terminal 31 residues, 1-31 (MAMALALRRLSSSADKPLQRLFNGGHLYSMS), are a transit peptide targeting the mitochondrion. Position 287 is an N6-(pyridoxal phosphate)lysine (lysine 287).

The protein belongs to the SHMT family. In terms of assembly, homotetramer. It depends on pyridoxal 5'-phosphate as a cofactor.

The protein resides in the mitochondrion. The enzyme catalyses (6R)-5,10-methylene-5,6,7,8-tetrahydrofolate + glycine + H2O = (6S)-5,6,7,8-tetrahydrofolate + L-serine. The protein operates within one-carbon metabolism; tetrahydrofolate interconversion. In terms of biological role, catalyzes the interconversion of serine and glycine. This Flaveria pringlei protein is Serine hydroxymethyltransferase 1, mitochondrial.